The primary structure comprises 221 residues: 3-dehydroquinate dehydratase (221 aa).

3-dehydroquinate is bound by residues 33–35 and Arg-63; that span reads EIR. His-118 serves as the catalytic Proton donor/acceptor. Lys-144 serves as the catalytic Schiff-base intermediate with substrate. Positions 181, 200, and 204 each coordinate 3-dehydroquinate.

This sequence belongs to the type-I 3-dehydroquinase family. Homodimer.

It catalyses the reaction 3-dehydroquinate = 3-dehydroshikimate + H2O. It participates in metabolic intermediate biosynthesis; chorismate biosynthesis; chorismate from D-erythrose 4-phosphate and phosphoenolpyruvate: step 3/7. Its function is as follows. Involved in the third step of the chorismate pathway, which leads to the biosynthesis of aromatic amino acids. Catalyzes the cis-dehydration of 3-dehydroquinate (DHQ) and introduces the first double bond of the aromatic ring to yield 3-dehydroshikimate. The polypeptide is 3-dehydroquinate dehydratase (Methanothermobacter thermautotrophicus (strain ATCC 29096 / DSM 1053 / JCM 10044 / NBRC 100330 / Delta H) (Methanobacterium thermoautotrophicum)).